Reading from the N-terminus, the 319-residue chain is Ribonuclease Z (319 aa).

Zn(2+) contacts are provided by His62, His64, Asp66, His67, His145, Asp215, and His273. Residue Asp66 is the Proton acceptor of the active site.

The protein belongs to the RNase Z family. Homodimer. Requires Zn(2+) as cofactor.

The catalysed reaction is Endonucleolytic cleavage of RNA, removing extra 3' nucleotides from tRNA precursor, generating 3' termini of tRNAs. A 3'-hydroxy group is left at the tRNA terminus and a 5'-phosphoryl group is left at the trailer molecule.. Its function is as follows. Zinc phosphodiesterase, which displays some tRNA 3'-processing endonuclease activity. Probably involved in tRNA maturation, by removing a 3'-trailer from precursor tRNA. The chain is Ribonuclease Z from Borreliella afzelii (strain PKo) (Borrelia afzelii).